We begin with the raw amino-acid sequence, 264 residues long: Propanediol uptake facilitator PduF (264 aa).

2 consecutive transmembrane segments (helical) span residues Gly10 to Leu30 and Ile42 to Gly62. An NPA 1 motif is present at residues Asn66–Ala68. 3 helical membrane passes run Val84–Val104, Val143–Ala163, and Leu179–Ala199. The NPA 2 signature appears at Asn201–Ala203. Residues Ile228–Ile248 form a helical membrane-spanning segment.

This sequence belongs to the MIP/aquaporin (TC 1.A.8) family.

The protein resides in the cell inner membrane. Functionally, probably facilitates diffusion of 1,2-propanediol (1,2-PD) into the cell. Modeling suggests active transport of 1,2-PD is required at low extracellular concentrations to allow maximal growth and saturation of PduP/PduQ within the bacterial microcompartment (BMC); this protein may be the cellular transporter. In terms of biological role, the 1,2-PD-specific bacterial microcompartment (BMC) concentrates low levels of 1,2-PD catabolic enzymes, concentrates volatile reaction intermediates thus enhancing pathway flux and keeps the level of toxic, mutagenic propionaldehyde low. The polypeptide is Propanediol uptake facilitator PduF (Salmonella typhimurium (strain LT2 / SGSC1412 / ATCC 700720)).